The primary structure comprises 297 residues: Probable endonuclease 4 (297 aa).

Positions 69, 110, 145, 179, 182, 214, 227, 229, and 259 each coordinate Zn(2+).

It belongs to the AP endonuclease 2 family. Zn(2+) serves as cofactor.

It carries out the reaction Endonucleolytic cleavage to 5'-phosphooligonucleotide end-products.. Its function is as follows. Endonuclease IV plays a role in DNA repair. It cleaves phosphodiester bonds at apurinic or apyrimidinic (AP) sites, generating a 3'-hydroxyl group and a 5'-terminal sugar phosphate. The polypeptide is Probable endonuclease 4 (Bacillus velezensis (strain DSM 23117 / BGSC 10A6 / LMG 26770 / FZB42) (Bacillus amyloliquefaciens subsp. plantarum)).